A 718-amino-acid polypeptide reads, in one-letter code: Cyclomaltodextrin glucanotransferase (718 aa).

Residues 1-34 (MFQMAKRVLLSTTLTFSLLAGSALPFLPASAIYA) form the signal peptide. The interval 35–172 (DADTAVTNKQ…GIKIIIDFAP (138 aa)) is A1. 4 residues coordinate Ca(2+): Asp-61, Asn-63, Asn-66, and Asn-67. Cys-77 and Cys-84 form a disulfide bridge. Ca(2+) contacts are provided by Gly-85 and Asp-87. Residue 134–135 (YW) coordinates substrate. A Ca(2+)-binding site is contributed by Asn-173. Residues 173-236 (NHTSPAMETD…NLYDLADLNH (64 aa)) form a b region. His-174 is a binding site for substrate. Residue Ile-224 coordinates Ca(2+). A substrate-binding site is contributed by 227 to 230 (NLYD). Position 233 (Asp-233) interacts with Ca(2+). The interval 237 to 440 (NNSTIDTYFK…LRKSNPAIAY (204 aa)) is A2. Arg-261 contacts substrate. Catalysis depends on Asp-263, which acts as the Nucleophile. 266 to 267 (KH) is a binding site for substrate. His-267 provides a ligand contact to Ca(2+). Catalysis depends on Glu-291, which acts as the Proton donor. The substrate site is built by His-361, Asp-405, and Arg-409. Residues 441–528 (GSTQQRWINN…ATAVWQYTAS (88 aa)) are c. A d region spans residues 529–614 (ETTPTIGHVG…SNAYNDFTIL (86 aa)). The IPT/TIG domain maps to 532–612 (PTIGHVGPVM…VNSNAYNDFT (81 aa)). Residues 613-718 (ILSGDQVSVR…GTATVTINWQ (106 aa)) enclose the CBM20 domain. Residues 615-718 (SGDQVSVRFV…GTATVTINWQ (104 aa)) are e.

It belongs to the glycosyl hydrolase 13 family. As to quaternary structure, monomer. Ca(2+) serves as cofactor.

The protein resides in the secreted. It carries out the reaction Cyclizes part of a (1-&gt;4)-alpha-D-glucan chain by formation of a (1-&gt;4)-alpha-D-glucosidic bond.. In Bacillus licheniformis, this protein is Cyclomaltodextrin glucanotransferase (cgtA).